Consider the following 221-residue polypeptide: Casparian strip membrane protein 2 (221 aa).

The interval methionine 1 to lysine 21 is disordered. Residues methionine 1 to glycine 41 lie on the Cytoplasmic side of the membrane. Residues valine 42–isoleucine 62 traverse the membrane as a helical segment. Over threonine 63 to alanine 89 the chain is Extracellular. Residues phenylalanine 90–phenylalanine 110 form a helical membrane-spanning segment. At serine 111–aspartate 131 the chain is on the cytoplasmic side. The helical transmembrane segment at threonine 132–alanine 152 threads the bilayer. The Extracellular portion of the chain corresponds to histidine 153–isoleucine 221.

This sequence belongs to the Casparian strip membrane proteins (CASP) family. As to quaternary structure, homodimer and heterodimers.

The protein localises to the cell membrane. Regulates membrane-cell wall junctions and localized cell wall deposition. Required for establishment of the Casparian strip membrane domain (CSD) and the subsequent formation of Casparian strips, a cell wall modification of the root endodermis that determines an apoplastic barrier between the intraorganismal apoplasm and the extraorganismal apoplasm and prevents lateral diffusion. In Erythranthe guttata (Yellow monkey flower), this protein is Casparian strip membrane protein 2.